The primary structure comprises 466 residues: Asparagine--tRNA ligase (466 aa).

Belongs to the class-II aminoacyl-tRNA synthetase family. In terms of assembly, homodimer.

It localises to the cytoplasm. It carries out the reaction tRNA(Asn) + L-asparagine + ATP = L-asparaginyl-tRNA(Asn) + AMP + diphosphate + H(+). The polypeptide is Asparagine--tRNA ligase (Aliivibrio fischeri (strain ATCC 700601 / ES114) (Vibrio fischeri)).